The sequence spans 87 residues: uncharacterized protein (87 aa).

The first 25 residues, 1–25, serve as a signal peptide directing secretion; the sequence is MKIRKILLSSALSFGMLISAVPALA.

This is an uncharacterized protein from Bacillus subtilis (strain 168).